The chain runs to 62 residues: Large ribosomal subunit protein bL32 (62 aa).

A compositionally biased stretch (basic residues) spans 1–16; sequence MAVPKRKTSPSRRGMR. A disordered region spans residues 1-62; the sequence is MAVPKRKTSP…QILKPKTAEV (62 aa). Residues 28-44 are compositionally biased toward basic and acidic residues; the sequence is VEDKDSGELRRPHHLDL.

It belongs to the bacterial ribosomal protein bL32 family.

The polypeptide is Large ribosomal subunit protein bL32 (Azorhizobium caulinodans (strain ATCC 43989 / DSM 5975 / JCM 20966 / LMG 6465 / NBRC 14845 / NCIMB 13405 / ORS 571)).